Here is a 907-residue protein sequence, read N- to C-terminus: CRM-domain containing factor CFM3B, chloroplastic (907 aa).

The transit peptide at 1–59 (MAINSSHHFCPMTTTTTTSAKFVDSLGSSFCKFHGTSSSISLRSYRFGFSFMKNVKRLS) directs the protein to the chloroplast. Disordered stretches follow at residues 62 to 89 (GSSS…SKVV) and 101 to 123 (LGVI…GSSS). Over residues 70 to 84 (RNENWNRTQKQNQFR) the composition is skewed to polar residues. CRM domains lie at 220 to 316 (MTLS…DGSG) and 421 to 518 (STLG…EVGE). Positions 621 to 654 (SAKLVRKLERKLAFAEKKLLKAERALAKVEESLK) form a coiled coil. Residues 663–763 (EGITEEERFM…KDYKRPTTLR (101 aa)) form the CRM 3 domain. Residues 824-907 (MAYSSDEETE…LQNEELDVQP (84 aa)) form a disordered region. 2 stretches are compositionally biased toward acidic residues: residues 828–857 (SDEE…DEEG) and 868–881 (TDVE…DTDF). The span at 882-897 (GDNSASSTTPETTFVE) shows a compositional bias: polar residues.

In terms of assembly, interacts with RNA. Part of large ribonucleo-protein particles that contain CAF1 and/or CAF2, and RNC1. Interacts with RFC3 in plastids. Expressed at low levels in roots and shoots.

Its subcellular location is the plastid. It is found in the chloroplast. Binds specific group II introns in chloroplasts and facilitates their splicing. Exhibits non-specific action during plastid rRNA biogenesis; RFC3 prevents unaccurate splicing to improve the accuracy of plastid rRNA processing. Acts on subgroup IIB introns. The substrates of the subgroup IIB also require the CRM domain proteins CAF1 or CAF2, with a simultaneous binding of CFM3B and CAF1 or CAF2. Required for seed development. The sequence is that of CRM-domain containing factor CFM3B, chloroplastic from Arabidopsis thaliana (Mouse-ear cress).